The chain runs to 510 residues: 2,3-bisphosphoglycerate-independent phosphoglycerate mutase (510 aa).

2 residues coordinate Mn(2+): D15 and S65. The active-site Phosphoserine intermediate is S65. Substrate contacts are provided by residues H126, 155–156 (RD), R187, R193, 259–262 (RPDR), and K332. Mn(2+) is bound by residues D399, H403, D440, H441, and H458.

Belongs to the BPG-independent phosphoglycerate mutase family. Mn(2+) serves as cofactor.

The protein resides in the plastid. Its subcellular location is the chloroplast. The catalysed reaction is (2R)-2-phosphoglycerate = (2R)-3-phosphoglycerate. It functions in the pathway carbohydrate degradation; glycolysis; pyruvate from D-glyceraldehyde 3-phosphate: step 3/5. Functionally, catalyzes the interconversion of 2-phosphoglycerate and 3-phosphoglycerate. The sequence is that of 2,3-bisphosphoglycerate-independent phosphoglycerate mutase from Antithamnion sp. (Red alga).